The sequence spans 172 residues: C-phycocyanin beta chain (172 aa).

(2R,3E)-phycocyanobilin-binding positions include Asn35, Asp39, Asn72, Arg77, Cys82, 82-88, 149-151, and Cys153; these read CLRDMEI and TIG. N4-methylasparagine is present on Asn72.

Belongs to the phycobiliprotein family. In terms of assembly, heterodimer of an alpha and a beta subunit, which further assembles into trimers and the trimers into hexamers. The basic functional unit of phycobiliproteins is a ring-shaped hexamer formed from two back-to-back trimers contacting via the alpha chain subunits. The trimers are composed of alpha/beta subunit heterodimers arranged around a three-fold axis of symmetry. The phycoerythrins also contain a gamma subunit which is located in the center of the hexamer. Contains two covalently linked phycocyanobilin chromophores.

It is found in the plastid. The protein resides in the chloroplast thylakoid membrane. Light-harvesting photosynthetic tetrapyrrole chromophore-protein from the phycobiliprotein complex (phycobilisome, PBS). Phycocyanin is the major phycobiliprotein in the PBS rod. The protein is C-phycocyanin beta chain (cpcB) of Cyanidium caldarium (Red alga).